The sequence spans 212 residues: COP9 signalosome complex subunit 8 (212 aa).

The region spanning 26-193 (TSLSAYEEQA…KPVVTAPPKD (168 aa)) is the PCI domain.

This sequence belongs to the CSN8 family. In terms of assembly, component of the COP9 signalosome (CSN) complex.

The protein resides in the cytoplasm. The protein localises to the nucleus. Its function is as follows. Component of the COP9 signalosome (CSN) complex that acts as an regulator of the ubiquitin (Ubl) conjugation pathway by mediating the deneddylation of the cullin subunit of SCF-type E3 ubiquitin-protein ligase complexes. The CSN complex seems to link protein degradation to sexual development. This Emericella nidulans (strain FGSC A4 / ATCC 38163 / CBS 112.46 / NRRL 194 / M139) (Aspergillus nidulans) protein is COP9 signalosome complex subunit 8 (csnH).